The chain runs to 448 residues: Tubulin beta chain (448 aa).

The GTP site is built by Gln-11, Glu-69, Ser-138, Gly-142, Thr-143, Gly-144, Asn-204, and Asn-226. Mg(2+) is bound at residue Glu-69. A disordered region spans residues 425 to 448 (YQDAGVDEEEEEYDEEAPVEEPLE). Residues 429–448 (GVDEEEEEYDEEAPVEEPLE) are compositionally biased toward acidic residues.

The protein belongs to the tubulin family. As to quaternary structure, dimer of alpha and beta chains. A typical microtubule is a hollow water-filled tube with an outer diameter of 25 nm and an inner diameter of 15 nM. Alpha-beta heterodimers associate head-to-tail to form protofilaments running lengthwise along the microtubule wall with the beta-tubulin subunit facing the microtubule plus end conferring a structural polarity. Microtubules usually have 13 protofilaments but different protofilament numbers can be found in some organisms and specialized cells. Mg(2+) serves as cofactor.

Its subcellular location is the cytoplasm. It localises to the cytoskeleton. In terms of biological role, tubulin is the major constituent of microtubules, a cylinder consisting of laterally associated linear protofilaments composed of alpha- and beta-tubulin heterodimers. Microtubules grow by the addition of GTP-tubulin dimers to the microtubule end, where a stabilizing cap forms. Below the cap, tubulin dimers are in GDP-bound state, owing to GTPase activity of alpha-tubulin. The chain is Tubulin beta chain from Metarhizium anisopliae (Entomophthora anisopliae).